The following is a 191-amino-acid chain: MVKVCLFVADGTDEIEFSAPWGIFKRAEIPIDSVYVGENKDRLVKMSRDVEMYANRSYKEIPSADDFAKQYDIAIIPGGGLGAKTLSTTPFVQQVVKEFYKKPNKWIGMICAGTLTAKTSGLPNKQITGHPSVRGQLEEGGYKYLDQPVVLEENLITSQGPGTAMLFGLKLLEQVASKDKYNAVYKSLSMP.

Catalysis depends on residues glutamate 16, cysteine 111, and histidine 130.

The protein belongs to the peptidase C56 family.

It is found in the cytoplasm. It localises to the nucleus. It carries out the reaction methylglyoxal + H2O = (R)-lactate + H(+). In terms of biological role, catalyzes the conversion of methylglyoxal (MG) to D-lactate in a single glutathione (GSH)-independent step. May play a role in detoxifying endogenously produced glyoxals. Involved in protection against reactive oxygen species (ROS). The chain is Glutathione-independent glyoxalase DJ-1 from Schizosaccharomyces pombe (strain 972 / ATCC 24843) (Fission yeast).